Here is a 147-residue protein sequence, read N- to C-terminus: UPF0306 protein YhbP (147 aa).

The protein belongs to the UPF0306 family.

In Escherichia coli O157:H7 (strain EC4115 / EHEC), this protein is UPF0306 protein YhbP.